The following is a 221-amino-acid chain: Large ribosomal subunit protein uL4 (221 aa).

Residues 47 to 77 form a disordered region; sequence GTASTKTRGEVSGGGRKPWIQKHTGRARQGS.

This sequence belongs to the universal ribosomal protein uL4 family. As to quaternary structure, part of the 50S ribosomal subunit.

In terms of biological role, one of the primary rRNA binding proteins, this protein initially binds near the 5'-end of the 23S rRNA. It is important during the early stages of 50S assembly. It makes multiple contacts with different domains of the 23S rRNA in the assembled 50S subunit and ribosome. Its function is as follows. Forms part of the polypeptide exit tunnel. The sequence is that of Large ribosomal subunit protein uL4 from Thermosipho melanesiensis (strain DSM 12029 / CIP 104789 / BI429).